The chain runs to 157 residues: Transcription elongation factor GreA (157 aa).

The protein belongs to the GreA/GreB family.

In terms of biological role, necessary for efficient RNA polymerase transcription elongation past template-encoded arresting sites. The arresting sites in DNA have the property of trapping a certain fraction of elongating RNA polymerases that pass through, resulting in locked ternary complexes. Cleavage of the nascent transcript by cleavage factors such as GreA or GreB allows the resumption of elongation from the new 3'terminus. GreA releases sequences of 2 to 3 nucleotides. In Brucella abortus (strain S19), this protein is Transcription elongation factor GreA.